The sequence spans 156 residues: Cytochrome c-type biogenesis protein CcmE (156 aa).

Over 1-16 the chain is Cytoplasmic; it reads MNATKAPGGIKPKHQR. The chain crosses the membrane as a helical; Signal-anchor for type II membrane protein span at residues 17–37; that stretch reads LVLLVIALVALIGAGLLAAYA. Topologically, residues 38–156 are periplasmic; that stretch reads LSNQASYFYV…QAEAVVAETK (119 aa). The heme site is built by histidine 131 and tyrosine 135.

Belongs to the CcmE/CycJ family.

Its subcellular location is the cell inner membrane. Heme chaperone required for the biogenesis of c-type cytochromes. Transiently binds heme delivered by CcmC and transfers the heme to apo-cytochromes in a process facilitated by CcmF and CcmH. This Novosphingobium aromaticivorans (strain ATCC 700278 / DSM 12444 / CCUG 56034 / CIP 105152 / NBRC 16084 / F199) protein is Cytochrome c-type biogenesis protein CcmE.